A 204-amino-acid polypeptide reads, in one-letter code: Thymidylate kinase (204 aa).

An ATP-binding site is contributed by 10-17 (GGDGAGKT).

The protein belongs to the thymidylate kinase family.

The catalysed reaction is dTMP + ATP = dTDP + ADP. Functionally, phosphorylation of dTMP to form dTDP in both de novo and salvage pathways of dTTP synthesis. This is Thymidylate kinase from Cutibacterium acnes (strain DSM 16379 / KPA171202) (Propionibacterium acnes).